Reading from the N-terminus, the 426-residue chain is Adenylosuccinate synthetase (426 aa).

GTP is bound by residues 12–18 (GDEGKGK) and 40–42 (GHT). Residue Asp13 is the Proton acceptor of the active site. Residues Asp13 and Gly40 each coordinate Mg(2+). Residues 13 to 16 (DEGK), 38 to 41 (NAGH), Thr131, Arg145, Gln226, Thr241, and Arg305 contribute to the IMP site. Catalysis depends on His41, which acts as the Proton donor. 301-307 (ATTGRKR) serves as a coordination point for substrate. Residues Arg307, 333-335 (KLD), and 415-417 (SVG) contribute to the GTP site.

Belongs to the adenylosuccinate synthetase family. As to quaternary structure, homodimer. Mg(2+) serves as cofactor.

It is found in the cytoplasm. The catalysed reaction is IMP + L-aspartate + GTP = N(6)-(1,2-dicarboxyethyl)-AMP + GDP + phosphate + 2 H(+). It functions in the pathway purine metabolism; AMP biosynthesis via de novo pathway; AMP from IMP: step 1/2. In terms of biological role, plays an important role in the de novo pathway of purine nucleotide biosynthesis. Catalyzes the first committed step in the biosynthesis of AMP from IMP. The chain is Adenylosuccinate synthetase from Nitratidesulfovibrio vulgaris (strain ATCC 29579 / DSM 644 / CCUG 34227 / NCIMB 8303 / VKM B-1760 / Hildenborough) (Desulfovibrio vulgaris).